The sequence spans 504 residues: DnaJ homolog subfamily C member 3 (504 aa).

Residues 1-31 (MVAPGSVTSRLGSVFPFLLVLVDLQYEGAEC) form the signal peptide. TPR repeat units follow at residues 37–70 (VEKH…DPDN), 72–104 (IAYY…KMDF), 105–138 (TAAR…NPSE), 154–187 (MQRL…CVWD), 189–221 (ELRE…KNDN), 222–255 (TEAF…DQDH), 268–301 (LNKL…EPSI), 306–339 (VRSK…EPDN), and 340–373 (VNAL…NEND). A disulfide bridge connects residues cysteine 248 and cysteine 258. At serine 274 the chain carries Phosphoserine; by FAM20C. Cysteine 313 and cysteine 329 form a disulfide bridge. The segment at 375–393 (QIREGLEKAQRLLKQSQKR) is flexible linker. In terms of domain architecture, J spans 394–462 (DYYKILGVKR…EMRKKFDDGE (69 aa)). The tract at residues 451 to 481 (DPEMRKKFDDGEDPLDAESQQGGGGNPFHRS) is disordered.

As to quaternary structure, interacts with EIF2AK4/GCN2; this interaction occurs under endoplasmic reticulum (ER) stress, hypothermic and amino acid starving stress conditions and inhibits EIF2AK4/GCN2 kinase activity. Interacts with EIF2AK3. Interacts with EIF2AK2. Forms a trimeric complex with DNAJB1 and HSPA8. Interacts with THAP12. As to expression, widely expressed with high level in the pancreas and testis. Also expressed in cell lines with different levels.

The protein localises to the endoplasmic reticulum. Functionally, involved in the unfolded protein response (UPR) during endoplasmic reticulum (ER) stress. Acts as a negative regulator of the EIF2AK4/GCN2 kinase activity by preventing the phosphorylation of eIF-2-alpha at 'Ser-52' and hence attenuating general protein synthesis under ER stress, hypothermic and amino acid starving stress conditions. Co-chaperone of HSPA8/HSC70, it stimulates its ATPase activity. May inhibit both the autophosphorylation of EIF2AK2/PKR and the ability of EIF2AK2 to catalyze phosphorylation of the EIF2A. May inhibit EIF2AK3/PERK activity. This chain is DnaJ homolog subfamily C member 3 (DNAJC3), found in Homo sapiens (Human).